The chain runs to 373 residues: 3 beta-hydroxysteroid dehydrogenase/Delta 5--&gt;4-isomerase type 2 (373 aa).

The active-site Proton acceptor is tyrosine 155. Lysine 159 is an NAD(+) binding site. The chain crosses the membrane as a helical span at residues 288–308 (VPLLYWLAFLLETVSFLLSPI).

This sequence belongs to the 3-beta-HSD family. In terms of tissue distribution, liver and kidney.

The protein localises to the endoplasmic reticulum membrane. It is found in the mitochondrion membrane. It carries out the reaction a 3beta-hydroxy-Delta(5)-steroid + NAD(+) = a 3-oxo-Delta(5)-steroid + NADH + H(+). It catalyses the reaction a 3-oxo-Delta(5)-steroid = a 3-oxo-Delta(4)-steroid. The catalysed reaction is pregnenolone + NAD(+) = pregn-5-ene-3,20-dione + NADH + H(+). The enzyme catalyses pregn-5-ene-3,20-dione = progesterone. It carries out the reaction 3beta-hydroxyandrost-5-en-17-one + NAD(+) = androst-5-ene-3,17-dione + NADH + H(+). It catalyses the reaction androst-5-ene-3,17-dione = androst-4-ene-3,17-dione. Its pathway is lipid metabolism; steroid biosynthesis. Functionally, 3-beta-HSD is a bifunctional enzyme, that catalyzes the oxidative conversion of Delta(5)-ene-3-beta-hydroxy steroid, and the oxidative conversion of ketosteroids. The 3-beta-HSD enzymatic system plays a crucial role in the biosynthesis of all classes of hormonal steroids. This chain is 3 beta-hydroxysteroid dehydrogenase/Delta 5--&gt;4-isomerase type 2, found in Mus musculus (Mouse).